The following is a 410-amino-acid chain: MSAKKPVKKVVLAYSGGLDTSVILKWLQDAYDAEVVTFTADLGQGEELEPARRKAEAAGVSEIFIEDLREEFVRDFVYPMVRANAVYEGLYLLGTSIARPLIAKRLVEIAHATGADAVAHGATGKGNDQVRFELGVYALDPDLRVIAPWREWDLNSRTKLIAYAEENGIEVAKDKRGEAPFSVDANLWHTSSEGKILEDPAEEAADIVYQRTDAPEAAPDKPEYVTIAFEAGDAVAVNGEAMSPATLLTRLNALGRVHGVGRLDLVENRFVGMKSRGIYETPGGTILMAAHRGIEQITLDRGACHLKDELMPRYAKLLYEGFWFSPEREMLQAAIDHSQKDVTGEVRLKLYKGSVNVVGRSSEHSLYSLEHVTFEEDIVYDQKDAEGFIRLNALRLQLLARRKRRLGHNE.

ATP contacts are provided by residues 13–21 (AYSGGLDTS) and alanine 40. Positions 91 and 96 each coordinate L-citrulline. Glycine 121 serves as a coordination point for ATP. Threonine 123, asparagine 127, and aspartate 128 together coordinate L-aspartate. Asparagine 127 lines the L-citrulline pocket. The L-citrulline site is built by arginine 131, serine 182, serine 191, glutamate 267, and tyrosine 279.

The protein belongs to the argininosuccinate synthase family. Type 1 subfamily. In terms of assembly, homotetramer.

The protein resides in the cytoplasm. It catalyses the reaction L-citrulline + L-aspartate + ATP = 2-(N(omega)-L-arginino)succinate + AMP + diphosphate + H(+). The protein operates within amino-acid biosynthesis; L-arginine biosynthesis; L-arginine from L-ornithine and carbamoyl phosphate: step 2/3. The sequence is that of Argininosuccinate synthase from Maricaulis maris (strain MCS10) (Caulobacter maris).